Here is a 93-residue protein sequence, read N- to C-terminus: MDGIKYAVFTEKSIRLLGNNQYTSNVESGSTRTEIKHWVELFFGVKVIAMNSHRLPGKGRRVGPIKGHTMHYRRMIITLQPGYSIPPLIEKRT.

The protein belongs to the universal ribosomal protein uL23 family. In terms of assembly, part of the 50S ribosomal subunit.

It is found in the plastid. It localises to the chloroplast. Binds to 23S rRNA. In Acorus calamus (Sweet flag), this protein is Large ribosomal subunit protein uL23cz/uL23cy (rpl23-A).